Here is a 419-residue protein sequence, read N- to C-terminus: UDP-N-acetylglucosamine 1-carboxyvinyltransferase (419 aa).

22–23 contacts phosphoenolpyruvate; the sequence is KN. Arg-91 is a UDP-N-acetyl-alpha-D-glucosamine binding site. Cys-115 functions as the Proton donor in the catalytic mechanism. At Cys-115 the chain carries 2-(S-cysteinyl)pyruvic acid O-phosphothioketal. UDP-N-acetyl-alpha-D-glucosamine contacts are provided by residues 120-124, 160-163, Asp-305, and Ile-327; these read RPVDL and KVSV.

Belongs to the EPSP synthase family. MurA subfamily.

It is found in the cytoplasm. The catalysed reaction is phosphoenolpyruvate + UDP-N-acetyl-alpha-D-glucosamine = UDP-N-acetyl-3-O-(1-carboxyvinyl)-alpha-D-glucosamine + phosphate. The protein operates within cell wall biogenesis; peptidoglycan biosynthesis. Its function is as follows. Cell wall formation. Adds enolpyruvyl to UDP-N-acetylglucosamine. This is UDP-N-acetylglucosamine 1-carboxyvinyltransferase from Tolumonas auensis (strain DSM 9187 / NBRC 110442 / TA 4).